We begin with the raw amino-acid sequence, 831 residues long: MIPLDPAQRAAELRCRLQEANYHYHVLDQPRIPDADYDRMLRELDALEAAYPDLATPDSPTQRVGHTIATAFSEVRHTVPMLSLNNAFSDPEVLEFVRRITACLGETAPGFSAEPKLDGLAISLRYQNGIFIQGATRGDGVTGEDVTANLRTLPTIPQRLQSDTWPTVLEVRGEVYMPRPDFEAYNTQARLRGWKVLANPRNGAAGSLRQLDPHITAQRPLSFYAYGIGEVTDDVSFHRHSEILASLRAWGFPVSPLVELVYGSEELLNYYRRMETIRDTLPFDIDGIVYKLDDLSGQREMGFVARAPRWAIAHKFPAQEQTTTVEAIEIQIGRTGAATPVARLTPVQVAGVTVTSATLHNADQIARLDVRIGDTVIVRRAGDVIPEVVTVITDSRPLGATAWSMPMACPVCGSEIVRETGAAVWRCSGELACPAQRKEAIRHFVSRRAMDVEGLGVKCIELLVDAAVVHGVADLYHLSLDQLLRLRLVTNAQTPTMLLREARDHVTGMRYQQLEEILRTVGVDLSGEGDVPKHWQIDVLRAQWPDFDWNHKKIATKWAQNLIAAIDRSRQTTLERFLFALGMTHVGETTAKALAHSFGDLAIIRQLPWPLFKCVPDIGGEVARAIGHFMDQPANQQAIDDLVERGVRITDTHPPTSTLRDQLTLASLLEHLDIPKITPLRAVQLAALAPTLPLLAEAALDTLLQAGVSQPAAQSLTEWFQSPDNISLARRLQHCCDVLLAQLPSADRAHTAPLNGQSVVLTGKLASLTREAAATRLEMLGAKIVGSVSKKTSFLVAGEDPGSKLDKAHALHVDIWDEARLLAFLGQYSAQ.

NAD(+)-binding positions include 34 to 38, 83 to 84, and glutamate 114; these read DADYD and SL. The active-site N6-AMP-lysine intermediate is the lysine 116. NAD(+) contacts are provided by arginine 137, glutamate 174, lysine 291, and lysine 315. Zn(2+) contacts are provided by cysteine 409, cysteine 412, cysteine 427, and cysteine 433. The BRCT domain occupies 749–831; sequence AHTAPLNGQS…LAFLGQYSAQ (83 aa).

Belongs to the NAD-dependent DNA ligase family. LigA subfamily. Mg(2+) serves as cofactor. Requires Mn(2+) as cofactor.

It carries out the reaction NAD(+) + (deoxyribonucleotide)n-3'-hydroxyl + 5'-phospho-(deoxyribonucleotide)m = (deoxyribonucleotide)n+m + AMP + beta-nicotinamide D-nucleotide.. Its function is as follows. DNA ligase that catalyzes the formation of phosphodiester linkages between 5'-phosphoryl and 3'-hydroxyl groups in double-stranded DNA using NAD as a coenzyme and as the energy source for the reaction. It is essential for DNA replication and repair of damaged DNA. In Xylella fastidiosa (strain 9a5c), this protein is DNA ligase.